We begin with the raw amino-acid sequence, 334 residues long: Atypical chemokine receptor 1 (334 aa).

The Extracellular portion of the chain corresponds to 1–61 (MGNCLYPVET…CNLLDRSSLP (61 aa)). N-linked (GlcNAc...) asparagine glycans are attached at residues asparagine 16, asparagine 26, and asparagine 32. 2 cysteine pairs are disulfide-bonded: cysteine 49/cysteine 274 and cysteine 127/cysteine 193. Residues 62-82 (FFMLTSVLGMLASGSILFAIL) form a helical membrane-spanning segment. Topologically, residues 83-93 (RPFFHWQICPS) are cytoplasmic. Residues 94–114 (WPILAELAVGSALFSIAVPIL) form a helical membrane-spanning segment. Topologically, residues 115 to 127 (APGLHSAHSTALC) are extracellular. The helical transmembrane segment at 128 to 151 (NLGYWVWYTSAFAQALLIGCYACL) threads the bilayer. Residues 152–164 (NPRLNIGQLRGFT) lie on the Cytoplasmic side of the membrane. Residues 165-185 (LGLSVGLWGAAALSGLPVALA) traverse the membrane as a helical segment. Over 186 to 205 (SDVYNGFCTFPSSRDMEALK) the chain is Extracellular. A helical membrane pass occupies residues 206–226 (YTHYAICFTIFTVLPLTLLAA). Over 227 to 242 (KGLKIALSKGPGPWVS) the chain is Cytoplasmic. A helical membrane pass occupies residues 243–263 (VLWIWFIFWWPHGMVLIFDAL). At 264 to 285 (VRSKTVLLYTCQSQKILDAMLN) the chain is on the extracellular side. N-linked (GlcNAc...) asparagine glycosylation occurs at asparagine 285. A helical transmembrane segment spans residues 286–306 (VTEALSMLHCVATPLLLALFC). Residues 307-334 (HQTTRRSLSSLSLPTRQASQMDALAGKS) are Cytoplasmic-facing.

The protein belongs to the G-protein coupled receptor 1 family. Atypical chemokine receptor subfamily. Expressed in liver and brain.

It localises to the early endosome. The protein localises to the recycling endosome. Its subcellular location is the membrane. In terms of biological role, atypical chemokine receptor that controls chemokine levels and localization via high-affinity chemokine binding that is uncoupled from classic ligand-driven signal transduction cascades, resulting instead in chemokine sequestration, degradation, or transcytosis. Also known as interceptor (internalizing receptor) or chemokine-scavenging receptor or chemokine decoy receptor. Has a promiscuous chemokine-binding profile, interacting with inflammatory chemokines of both the CXC and the CC subfamilies but not with homeostatic chemokines. Acts as a receptor for chemokines including CCL2, CCL5, CCL7, CCL11, CCL13, CCL14, CCL17, CXCL5, CXCL6, IL8/CXCL8, CXCL11, GRO, RANTES, MCP-1 and TARC. May regulate chemokine bioavailability and, consequently, leukocyte recruitment through two distinct mechanisms: when expressed in endothelial cells, it sustains the abluminal to luminal transcytosis of tissue-derived chemokines and their subsequent presentation to circulating leukocytes; when expressed in erythrocytes, serves as blood reservoir of cognate chemokines but also as a chemokine sink, buffering potential surges in plasma chemokine levels. Its function is as follows. (Microbial infection) Acts as a receptor for the malaria parasite Plasmodium yoelii in mature erythrocytes but not reticulocytes. The chain is Atypical chemokine receptor 1 (Ackr1) from Mus musculus (Mouse).